The sequence spans 636 residues: Amylosucrase (636 aa).

Positions 152, 195, 262, and 292 each coordinate substrate. The active-site Nucleophile is aspartate 294. Glutamate 336 (proton donor) is an active-site residue. Residues histidine 400, aspartate 401, and arginine 517 each contribute to the substrate site.

It belongs to the glycosyl hydrolase 13 family. In terms of assembly, monomer.

Its subcellular location is the secreted. It carries out the reaction [(1-&gt;4)-alpha-D-glucosyl](n) + sucrose = [(1-&gt;4)-alpha-D-glucosyl](n+1) + D-fructose. Amylosucrase favors hydrolysis at low sucrose concentrations, and polymerization at high sucrose concentrations. Competitively inhibited by fructose. Its function is as follows. Catalyzes the synthesis of alpha-glucan from sucrose. Catalyzes, in addition, sucrose hydrolysis, maltose and maltotriose synthesis by successive transfers of the glucosyl moiety of sucrose onto the released glucose, and finally turanose and trehalulose synthesis, these two sucrose isomers being obtained by glucosyl transfer onto fructose. The chain is Amylosucrase (ams) from Neisseria polysaccharea.